Reading from the N-terminus, the 498-residue chain is Probable cytosol aminopeptidase (498 aa).

Mn(2+) is bound by residues lysine 262 and aspartate 267. Lysine 274 is an active-site residue. 3 residues coordinate Mn(2+): aspartate 285, aspartate 344, and glutamate 346. The active site involves arginine 348.

This sequence belongs to the peptidase M17 family. Requires Mn(2+) as cofactor.

The protein resides in the cytoplasm. The catalysed reaction is Release of an N-terminal amino acid, Xaa-|-Yaa-, in which Xaa is preferably Leu, but may be other amino acids including Pro although not Arg or Lys, and Yaa may be Pro. Amino acid amides and methyl esters are also readily hydrolyzed, but rates on arylamides are exceedingly low.. It catalyses the reaction Release of an N-terminal amino acid, preferentially leucine, but not glutamic or aspartic acids.. Functionally, presumably involved in the processing and regular turnover of intracellular proteins. Catalyzes the removal of unsubstituted N-terminal amino acids from various peptides. In Phytoplasma mali (strain AT), this protein is Probable cytosol aminopeptidase.